Reading from the N-terminus, the 478-residue chain is H(+)/Cl(-) exchange transporter ClcA (478 aa).

Residues 1-32 (MTHSTQQLSPEGVAEGKRGRLIRELVNRDKTP) are Cytoplasmic-facing. Residues 33-69 (LIILIMAAVVGVVTGLLGVAFDRGVDWVQQQRLLALA) form a helical membrane-spanning segment. Residues 70-76 (NVADYAL) are Periplasmic-facing. A helical transmembrane segment spans residues 77–100 (LVWPLAFIMSALLAMMGYFLVSRF). The Selectivity filter part_1 motif lies at 106-110 (GSGIP). Residue S107 coordinates chloride. An intramembrane region (helical) is located at residues 109–116 (IPEIEGAM). Residues 117–123 (EEMRPVR) are Cytoplasmic-facing. The next 2 helical transmembrane spans lie at 124–141 (WWRV…TLGA) and 148–166 (EGPM…VDIF). The Selectivity filter part_2 motif lies at 146-150 (GREGP). Residues 167 to 176 (RLRSPEARHS) lie on the Cytoplasmic side of the membrane. 2 consecutive intramembrane regions (helical) follow at residues 177 to 189 (LLAT…LSAA) and 193 to 201 (PLAGILFVI). Topologically, residues 202-214 (EEMRSQFRYSLVS) are cytoplasmic. Residues 215-232 (IKAVFIGVITSTIVYRYF) traverse the membrane as a helical segment. The Periplasmic segment spans residues 233 to 252 (NGERAIIEVGKLSDAPLNTL). Residues 253-281 (WLYLLLGIIFGAVGVIFNALIFRTQDMFV) traverse the membrane as a helical segment. The Cytoplasmic portion of the chain corresponds to 282–287 (RFHGGD). The chain crosses the membrane as a helical span at residues 288 to 309 (WRKLVLIGGLLGGMCGLLALLH). Over 310–329 (GNAVGGGFALIPIAAAGNFS) the chain is Periplasmic. Transmembrane regions (helical) follow at residues 330–349 (IGML…LCFG) and 355–376 (GIFA…LSCA). A Selectivity filter part_3 motif is present at residues 355–359 (GIFAP). Residues I356 and F357 each coordinate chloride. Residues 377–386 (HFFPQYGIEA) are Periplasmic-facing. The segment at residues 387–401 (GTFAIAGMGALFAAS) is an intramembrane region (helical). The segment at residues 402-404 (VRA) is an intramembrane region (note=Loop between two helices). Positions 405–416 (PLTGIVLVLEMT) form an intramembrane region, helical. Positions 417–421 (DNYQL) form an intramembrane region, note=Loop between two helices. A helical transmembrane segment spans residues 422 to 438 (ILPMIVTCLGATLIAQF). Over 439–478 (MGGKPLYSAILARTLAKQEQARATVIAQEPAVENTPQIGK) the chain is Cytoplasmic. Y445 contributes to the chloride binding site.

Belongs to the chloride channel (TC 2.A.49) family. ClcA subfamily. Homodimer.

The protein resides in the cell inner membrane. The catalysed reaction is 2 chloride(in) + H(+)(out) = 2 chloride(out) + H(+)(in). Proton-coupled chloride transporter. Functions as antiport system and exchanges two chloride ions for 1 proton. Probably acts as an electrical shunt for an outwardly-directed proton pump that is linked to amino acid decarboxylation, as part of the extreme acid resistance (XAR) response. This is H(+)/Cl(-) exchange transporter ClcA from Yersinia pestis bv. Antiqua (strain Antiqua).